Reading from the N-terminus, the 439-residue chain is MPTVLIVGKSNVGKSTLFNKLIGYKKSIVDDKEGVTRDAVSGRVSYYSKTFNIVDTGGIFENPEDDIINKSKDLTLKMLNEADLILFVIDAKNGITSEDYYLADIIRKSNNDVILVSNKSESERRVQNNLPDIYKLGFGDPIFVSAEQGKNIDTLIERIVNVLESKGLSLEENLKEESQSIIRVSFIGRPNAGKSTLFNSILNKERVLVTPIPGTTRDSVDELVTINGRKYLFVDTAGLRRKSKVDYKSLDMYSNVRSIKSIENSDVVVILIDAIEGITHQDQRIAGIAENRGKATIVAFNKIDLIKNFKYKKEEFIDQFNEKLYFINYSPLIFLSAINKKGIDNLINAIDEAYKSLHYRVQTSAVNSAIQRMMAFTPPPKGLKILYGTQVDIRPPTFLFFTNGKKVPEFYQNHIRKTIRENIYPFVGAPIFLKFKSRH.

2 EngA-type G domains span residues 2-167 and 182-358; these read PTVL…ESKG and IRVS…KSLH. Residues 8-15, 55-59, 118-121, 188-195, 235-239, and 301-304 contribute to the GTP site; these read GKSNVGKS, DTGGI, NKSE, GRPNAGKS, DTAGL, and NKID. Positions 359–439 constitute a KH-like domain; it reads YRVQTSAVNS…PIFLKFKSRH (81 aa).

Belongs to the TRAFAC class TrmE-Era-EngA-EngB-Septin-like GTPase superfamily. EngA (Der) GTPase family. In terms of assembly, associates with the 50S ribosomal subunit.

In terms of biological role, GTPase that plays an essential role in the late steps of ribosome biogenesis. This Thermosipho africanus (strain TCF52B) protein is GTPase Der.